Consider the following 572-residue polypeptide: Sulfite reductase [NADPH] hemoprotein beta-component (572 aa).

Residues Cys-437, Cys-443, Cys-482, and Cys-486 each contribute to the [4Fe-4S] cluster site. Cys-486 lines the siroheme pocket.

Belongs to the nitrite and sulfite reductase 4Fe-4S domain family. As to quaternary structure, alpha(8)-beta(8). The alpha component is a flavoprotein, the beta component is a hemoprotein. Siroheme is required as a cofactor. [4Fe-4S] cluster serves as cofactor.

It catalyses the reaction hydrogen sulfide + 3 NADP(+) + 3 H2O = sulfite + 3 NADPH + 4 H(+). The protein operates within sulfur metabolism; hydrogen sulfide biosynthesis; hydrogen sulfide from sulfite (NADPH route): step 1/1. Component of the sulfite reductase complex that catalyzes the 6-electron reduction of sulfite to sulfide. This is one of several activities required for the biosynthesis of L-cysteine from sulfate. The polypeptide is Sulfite reductase [NADPH] hemoprotein beta-component (Lysinibacillus sphaericus (strain C3-41)).